The sequence spans 551 residues: Formate--tetrahydrofolate ligase (551 aa).

54–61 (TPPGEGKT) contributes to the ATP binding site.

It belongs to the formate--tetrahydrofolate ligase family.

The catalysed reaction is (6S)-5,6,7,8-tetrahydrofolate + formate + ATP = (6R)-10-formyltetrahydrofolate + ADP + phosphate. It participates in one-carbon metabolism; tetrahydrofolate interconversion. This chain is Formate--tetrahydrofolate ligase, found in Myxococcus xanthus (strain DK1622).